The following is a 373-amino-acid chain: Superinfection exclusion protein (373 aa).

The signal sequence occupies residues 1 to 15 (MIVLLILSLACTAFT).

This sequence belongs to the serpin family. Orthopoxvirus OPG040 subfamily. Interacts with A56 protein.

The protein resides in the virion membrane. It localises to the host cell membrane. In terms of biological role, prevents cell to cell fusion via its interaction with A56 protein. The A56-K2 complex associates with components of the entry fusion complex (EFC) presumably to avoid superinfection and syncytium formation. The chain is Superinfection exclusion protein (OPG040) from Homo sapiens (Human).